The chain runs to 78 residues: Probable [Fe-S]-dependent transcriptional repressor (78 aa).

Residues C56, C61, C64, and C70 each coordinate iron-sulfur cluster.

This sequence belongs to the FeoC family.

In terms of biological role, may function as a transcriptional regulator that controls feoABC expression. The polypeptide is Probable [Fe-S]-dependent transcriptional repressor (Escherichia coli (strain UTI89 / UPEC)).